Here is a 560-residue protein sequence, read N- to C-terminus: Excitatory amino acid transporter 5 (560 aa).

At 1 to 16 (MVPHAILARGRDVCRR) the chain is on the cytoplasmic side. The next 3 membrane-spanning stretches (helical) occupy residues 17-37 (NGLL…GFFL), 60-80 (MLKM…LASL), and 94-114 (AYYL…VSII). At 115 to 216 (HPGSAAQKET…EVVYKSEPGT (102 aa)) the chain is on the extracellular side. A glycan (N-linked (GlcNAc...) asparagine) is linked at asparagine 191. Transmembrane regions (helical) follow at residues 217-237 (SDGM…IMLG), 260-280 (IVAV…AGKI), 300-320 (VVCG…FFIT), 330-350 (GILQ…TLPI), 372-392 (VGAT…AIFI), 414-434 (AASI…VIVL), and 457-477 (FRTM…AHIC).

The protein belongs to the dicarboxylate/amino acid:cation symporter (DAACS) (TC 2.A.23) family. SLC1A7 subfamily. As to quaternary structure, interacts with the PDZ domains of DLG4. As to expression, expressed primarily in retina. Detectable in liver, heart, muscle and brain.

The protein localises to the photoreceptor inner segment membrane. Its subcellular location is the synaptic cell membrane. It carries out the reaction K(+)(in) + L-glutamate(out) + 3 Na(+)(out) + H(+)(out) = K(+)(out) + L-glutamate(in) + 3 Na(+)(in) + H(+)(in). The enzyme catalyses K(+)(in) + L-aspartate(out) + 3 Na(+)(out) + H(+)(out) = K(+)(out) + L-aspartate(in) + 3 Na(+)(in) + H(+)(in). The catalysed reaction is D-aspartate(out) + K(+)(in) + 3 Na(+)(out) + H(+)(out) = D-aspartate(in) + K(+)(out) + 3 Na(+)(in) + H(+)(in). Functionally, sodium-dependent, high-affinity amino acid transporter that mediates the uptake of L-glutamate and also L-aspartate and D-aspartate. Functions as a symporter that transports one amino acid molecule together with two or three Na(+) ions and one proton, in parallel with the counter-transport of one K(+) ion. Acts primarily as an inhibitory glutamate-gated chloride channel being a major inhibitory presynaptic receptor at mammalian rod bipolar cell axon terminals. Glutamate binding gates a large Cl(-) conductance that mediates inhibition, affecting visual processing in the retina. The chain is Excitatory amino acid transporter 5 from Homo sapiens (Human).